The following is a 196-amino-acid chain: Beta-crystallin A4 (196 aa).

An N-acetylthreonine modification is found at Thr2. Residues 2-11 (TLQCTKSAGP) are N-terminal arm. 2 consecutive Beta/gamma crystallin 'Greek key' domains span residues 12–51 (WKMVVWDEDGFQGRRHEFTAECPSVLELGFETVRSLKVLS) and 52–98 (GAWV…RPAA). The interval 99–104 (CANHRD) is connecting peptide. 2 Beta/gamma crystallin 'Greek key' domains span residues 105–146 (SRLT…HVHS) and 147–195 (GAWV…RRIQ).

This sequence belongs to the beta/gamma-crystallin family. As to quaternary structure, homo/heterodimer, or complexes of higher-order. The structure of beta-crystallin oligomers seems to be stabilized through interactions between the N-terminal arms.

Functionally, crystallins are the dominant structural components of the vertebrate eye lens. This is Beta-crystallin A4 (CRYBA4) from Homo sapiens (Human).